The sequence spans 227 residues: Cytochrome c oxidase subunit 2 (227 aa).

Topologically, residues 1 to 14 (MAYPFQLGLQDATS) are mitochondrial intermembrane. The helical transmembrane segment at 15-45 (PIMEELLHFHDHTLMIVFLISSLVLYIITLM) threads the bilayer. Residues 46-59 (LTTKLTHTSTMDAQ) lie on the Mitochondrial matrix side of the membrane. A helical membrane pass occupies residues 60 to 87 (EVETVWTILPAIILILIALPSLRILYMM). The Mitochondrial intermembrane portion of the chain corresponds to 88–227 (DEINNPSLTV…YFETWSALMV (140 aa)). Positions 161, 196, 198, 200, 204, and 207 each coordinate Cu cation. Glu198 lines the Mg(2+) pocket. The residue at position 218 (Tyr218) is a Phosphotyrosine.

Belongs to the cytochrome c oxidase subunit 2 family. As to quaternary structure, component of the cytochrome c oxidase (complex IV, CIV), a multisubunit enzyme composed of 14 subunits. The complex is composed of a catalytic core of 3 subunits MT-CO1, MT-CO2 and MT-CO3, encoded in the mitochondrial DNA, and 11 supernumerary subunits COX4I, COX5A, COX5B, COX6A, COX6B, COX6C, COX7A, COX7B, COX7C, COX8 and NDUFA4, which are encoded in the nuclear genome. The complex exists as a monomer or a dimer and forms supercomplexes (SCs) in the inner mitochondrial membrane with NADH-ubiquinone oxidoreductase (complex I, CI) and ubiquinol-cytochrome c oxidoreductase (cytochrome b-c1 complex, complex III, CIII), resulting in different assemblies (supercomplex SCI(1)III(2)IV(1) and megacomplex MCI(2)III(2)IV(2)). Found in a complex with TMEM177, COA6, COX18, COX20, SCO1 and SCO2. Interacts with TMEM177 in a COX20-dependent manner. Interacts with COX20. Interacts with COX16. Requires Cu cation as cofactor.

The protein resides in the mitochondrion inner membrane. It catalyses the reaction 4 Fe(II)-[cytochrome c] + O2 + 8 H(+)(in) = 4 Fe(III)-[cytochrome c] + 2 H2O + 4 H(+)(out). Its function is as follows. Component of the cytochrome c oxidase, the last enzyme in the mitochondrial electron transport chain which drives oxidative phosphorylation. The respiratory chain contains 3 multisubunit complexes succinate dehydrogenase (complex II, CII), ubiquinol-cytochrome c oxidoreductase (cytochrome b-c1 complex, complex III, CIII) and cytochrome c oxidase (complex IV, CIV), that cooperate to transfer electrons derived from NADH and succinate to molecular oxygen, creating an electrochemical gradient over the inner membrane that drives transmembrane transport and the ATP synthase. Cytochrome c oxidase is the component of the respiratory chain that catalyzes the reduction of oxygen to water. Electrons originating from reduced cytochrome c in the intermembrane space (IMS) are transferred via the dinuclear copper A center (CU(A)) of subunit 2 and heme A of subunit 1 to the active site in subunit 1, a binuclear center (BNC) formed by heme A3 and copper B (CU(B)). The BNC reduces molecular oxygen to 2 water molecules using 4 electrons from cytochrome c in the IMS and 4 protons from the mitochondrial matrix. The sequence is that of Cytochrome c oxidase subunit 2 (MT-CO2) from Vulpes macrotis (Kit fox).